We begin with the raw amino-acid sequence, 403 residues long: Phosphoglycerate kinase (403 aa).

Substrate contacts are provided by residues 21–23 (DFN), Arg36, 59–62 (HLGR), Arg119, and Arg159. Residues Lys214, Gly301, Glu332, and 359–362 (GGDS) each bind ATP.

Belongs to the phosphoglycerate kinase family. In terms of assembly, monomer.

It localises to the cytoplasm. It carries out the reaction (2R)-3-phosphoglycerate + ATP = (2R)-3-phospho-glyceroyl phosphate + ADP. Its pathway is carbohydrate degradation; glycolysis; pyruvate from D-glyceraldehyde 3-phosphate: step 2/5. The polypeptide is Phosphoglycerate kinase (Lactobacillus gasseri (strain ATCC 33323 / DSM 20243 / BCRC 14619 / CIP 102991 / JCM 1131 / KCTC 3163 / NCIMB 11718 / NCTC 13722 / AM63)).